Reading from the N-terminus, the 385-residue chain is Eukaryotic translation initiation factor 3 subunit M (385 aa).

Positions 180-342 (NSELASKVMI…RKVHISSTMH (163 aa)) constitute a PCI domain.

It belongs to the eIF-3 subunit M family. Component of the eukaryotic translation initiation factor 3 (eIF-3) complex.

It is found in the cytoplasm. Its function is as follows. Component of the eukaryotic translation initiation factor 3 (eIF-3) complex, which is involved in protein synthesis of a specialized repertoire of mRNAs and, together with other initiation factors, stimulates binding of mRNA and methionyl-tRNAi to the 40S ribosome. The eIF-3 complex specifically targets and initiates translation of a subset of mRNAs involved in cell proliferation. The polypeptide is Eukaryotic translation initiation factor 3 subunit M (Anopheles gambiae (African malaria mosquito)).